Reading from the N-terminus, the 106-residue chain is BLOC-1-related complex subunit 7 (106 aa).

Belongs to the BORCS7 family. As to quaternary structure, component of the BLOC-one-related complex (BORC) which is composed of BLOC1S1, BLOC1S2, BORCS5, BORCS6, BORCS7, BORCS8, KXD1 and SNAPIN.

It localises to the lysosome membrane. In terms of biological role, as part of the BORC complex may play a role in lysosomes movement and localization at the cell periphery. Associated with the cytosolic face of lysosomes, the BORC complex may recruit ARL8B and couple lysosomes to microtubule plus-end-directed kinesin motor. This is BLOC-1-related complex subunit 7 from Pongo abelii (Sumatran orangutan).